The sequence spans 1486 residues: Protein PRRC2B (1486 aa).

Disordered stretches follow at residues 1 to 20 (MSDRLGQITQGKDGKSKYST), 39 to 306 (VIPR…FPLP), 320 to 341 (QMNDQDGKERPGVARPVRPLRQ), 385 to 519 (KFSD…AREE), and 531 to 658 (LDQK…EQLY). The span at 88–137 (ANKQDQQDPKSSSVTASQPPESQPQPGLQKSVSNLQKPTQSISQENTNSV) shows a compositional bias: polar residues. Residues Ser-166, Ser-168, Ser-222, and Ser-226 each carry the phosphoserine modification. Residues 219–235 (SAASLSASPTELGSRNA) show a composition bias toward polar residues. Thr-228 is subject to Phosphothreonine. Lys-251 participates in a covalent cross-link: Glycyl lysine isopeptide (Lys-Gly) (interchain with G-Cter in SUMO2). The span at 288-300 (SPQSSENQTTVER) shows a compositional bias: polar residues. Phosphoserine occurs at positions 387 and 415. Composition is skewed to basic and acidic residues over residues 422-433 (TDAKRTQEEGKD), 478-488 (HSAEDKEDKPP), and 501-519 (AVERARKRREEEERRAREE). Ser-479 is subject to Phosphoserine. Positions 494 to 544 (IQSEMSEAVERARKRREEEERRAREERLAACAAKLKQLDQKCRQAQKANET) form a coiled coil. Ser-555 is subject to Phosphoserine. Residues 600 to 611 (SNSSSSSSSSSS) show a composition bias toward low complexity. Ser-621 is modified (phosphoserine). Low complexity predominate over residues 638 to 656 (QRQQQQQQQQQQQQQQQEQ). Lys-751 is covalently cross-linked (Glycyl lysine isopeptide (Lys-Gly) (interchain with G-Cter in SUMO2)). Thr-753 is modified (phosphothreonine). Phosphoserine is present on residues Ser-762 and Ser-793. Disordered stretches follow at residues 792–847 (RSPD…EARK), 893–918 (EERRKKEQAAQVPVKGRGLSSRIPPR), and 950–1080 (ALPV…PGAV). Residues 880-904 (IEVLTKKQRRLLEEERRKKEQAAQV) adopt a coiled-coil conformation. Polar residues predominate over residues 960–986 (SWRTAVTAFSSTEPGTSEQGFKSSQGD). Residues 998 to 1007 (SSATSSQRSS) are compositionally biased toward low complexity. 2 stretches are compositionally biased toward basic and acidic residues: residues 1025 to 1055 (SKADSHKDQAQKQAEHKDSEQGSAQSKEHRP) and 1062 to 1074 (RSLKNRKGSEGAE). Residues Ser-1070 and Ser-1159 each carry the phosphoserine modification. Disordered stretches follow at residues 1177 to 1205 (KAWENSPSLPEQSSPGGAGSGIQPPSSVG), 1410 to 1443 (QSIQLPPGQSLSVGAPRRVPPPGSQPPVLNTSRE), and 1455 to 1486 (ADSKQNVPTGGSAPSPQAYRQSEWMKNPAWEP). Residues 1181–1191 (NSPSLPEQSSP) show a composition bias toward polar residues. The segment covering 1410-1421 (QSIQLPPGQSLS) has biased composition (low complexity). The segment covering 1457-1474 (SKQNVPTGGSAPSPQAYR) has biased composition (polar residues).

This is Protein PRRC2B (Prrc2b) from Mus musculus (Mouse).